Here is a 406-residue protein sequence, read N- to C-terminus: Putative ankyrin repeat protein RF_0266 (406 aa).

5 ANK repeats span residues 68-98, 103-129, 130-161, 163-189, and 203-232; these read TSHSTLSLIAVINNDLETLNLLINFGFDINN, NYITPLGLAADKGYKEIVKLLCEQDDI, KVQNALYYAIRGENKSIEIIDLLVQKGAIIKP, HIELAISHSNLSVFEYLFEKKLPDIEK, and SIDCILGEASKYQNTEVIKFLLSSGYKPEQ.

The protein is Putative ankyrin repeat protein RF_0266 of Rickettsia felis (strain ATCC VR-1525 / URRWXCal2) (Rickettsia azadi).